We begin with the raw amino-acid sequence, 427 residues long: Glutamate-1-semialdehyde 2,1-aminomutase (427 aa).

Lys265 carries the N6-(pyridoxal phosphate)lysine modification.

The protein belongs to the class-III pyridoxal-phosphate-dependent aminotransferase family. HemL subfamily. In terms of assembly, homodimer. Pyridoxal 5'-phosphate serves as cofactor.

The protein localises to the cytoplasm. It carries out the reaction (S)-4-amino-5-oxopentanoate = 5-aminolevulinate. It participates in porphyrin-containing compound metabolism; protoporphyrin-IX biosynthesis; 5-aminolevulinate from L-glutamyl-tRNA(Glu): step 2/2. In Burkholderia cenocepacia (strain ATCC BAA-245 / DSM 16553 / LMG 16656 / NCTC 13227 / J2315 / CF5610) (Burkholderia cepacia (strain J2315)), this protein is Glutamate-1-semialdehyde 2,1-aminomutase.